The following is a 152-amino-acid chain: Eukaryotic translation initiation factor 2 subunit 3 (152 aa).

Ala-1 bears the N-acetylalanine mark. Position 51 to 54 (Asn-51 to Asp-54) interacts with GTP.

The protein belongs to the TRAFAC class translation factor GTPase superfamily. Classic translation factor GTPase family. EIF2G subfamily. Eukaryotic translation initiation factor 2 eIF2 is a heterotrimeric complex composed of an alpha (EIF2S1), a beta (EIF2S2) and a gamma (EIF2S3) chain. eIF2 is member of the 43S pre-initiation complex (43S PIC). Interacts (via C-terminus) with CDC123; the interaction is direct.

It localises to the cytoplasm. Its subcellular location is the cytosol. Member of the eIF2 complex that functions in the early steps of protein synthesis by forming a ternary complex with GTP and initiator tRNA. This complex binds to a 40S ribosomal subunit, followed by mRNA binding to form the 43S pre-initiation complex (43S PIC). Junction of the 60S ribosomal subunit to form the 80S initiation complex is preceded by hydrolysis of the GTP bound to eIF2 and release of an eIF2-GDP binary complex. In order for eIF2 to recycle and catalyze another round of initiation, the GDP bound to eIF2 must exchange with GTP by way of a reaction catalyzed by eIF-2B. This Oryctolagus cuniculus (Rabbit) protein is Eukaryotic translation initiation factor 2 subunit 3 (EIF2S3).